The following is a 144-amino-acid chain: Large ribosomal subunit protein uL11 (144 aa).

The protein belongs to the universal ribosomal protein uL11 family. Part of the ribosomal stalk of the 50S ribosomal subunit. Interacts with L10 and the large rRNA to form the base of the stalk. L10 forms an elongated spine to which L12 dimers bind in a sequential fashion forming a multimeric L10(L12)X complex. Post-translationally, one or more lysine residues are methylated.

Functionally, forms part of the ribosomal stalk which helps the ribosome interact with GTP-bound translation factors. The sequence is that of Large ribosomal subunit protein uL11 from Neisseria gonorrhoeae (strain ATCC 700825 / FA 1090).